The primary structure comprises 808 residues: Piwi-like protein 1 (808 aa).

One can recognise a PAZ domain in the interval 214–333 (RINRVLNENN…IPGELCYLCG (120 aa)). The disordered stretch occupies residues 300–322 (SMVRPKEKTENEPEGPTETDQSL). A Piwi domain is found at 492–790 (HMALVFIPDD…LAELVGKIHR (299 aa)).

Belongs to the argonaute family. Piwi subfamily. As to expression, expressed in dividing adult somatic stem cells (neoblasts).

The sequence is that of Piwi-like protein 1 (wi-1) from Schmidtea mediterranea (Freshwater planarian flatworm).